The sequence spans 253 residues: Short chain dehydrogenase ple7 (253 aa).

Residues 5–25 (IVIVTGASHGIGLATVNLLLA) form a helical membrane-spanning segment. V8, R116, Y148, K152, and N184 together coordinate NADP(+). Y148 acts as the Proton acceptor in catalysis. Residue K152 is the Lowers pKa of active site Tyr of the active site. The N-linked (GlcNAc...) asparagine glycan is linked to N187.

It belongs to the short-chain dehydrogenases/reductases (SDR) family.

The protein resides in the membrane. It functions in the pathway secondary metabolite biosynthesis; terpenoid biosynthesis. In terms of biological role, short chain dehydrogenase; part of the gene cluster that mediates the biosynthesis of pleuromutilin, a tricyclic diterpene showing antibacterial properties. The geranylgeranyl diphosphate (GGPP) synthase ple4 catalyzes the first step in pleuromutilin biosynthesis. GGPP is then substrate of the premutilin synthase (PS) ple3 to yield premutilin. Premutilin synthase is a bifunctional enzyme composed of the fusion of a class II diterpene cyclase (DTC) and a class I diterpene synthase (DTS), with the corresponding domains and active sites containing characteristic aspartate-rich motifs. GGPP is first converted to mutildienyl-diphosphate (MPP) at the class II DTC site. MPP is subsequently further cyclized at the class I DTS site, followed by a 1,5-hydride shift and addition of water prior to terminating deprotonation, to yield premutilin. The cytochrome P450 monooxygenases ple5 and ple6 hydroxylate premutilin at C-11 and C-3, respectively, producing 11-hydroxypremutilin and 3-hydroxypremutilin. The combination of the actions of both ple5 and ple6 leads to the production of 3,11-dihydroxypremutilin. The short chain dehydrogenase ple7 further converts 3,11-dihydroxypremutilin into mutilin. The acetyltransferase ple2 then acetylates mutilin to produce 14-O-acetylmutilin. Finally, the cytochrome P450 monooxygenase ple1 catalyzes hydroxylation on the alpha position of the acetyl side chain of 14-O-acetylmutilin to yield pleuromutilin. In Rhodocybe pseudopiperita (Clitopilus pseudopiperitus), this protein is Short chain dehydrogenase ple7.